A 1688-amino-acid chain; its full sequence is Voltage-dependent L-type calcium channel subunit alpha-1S (1688 aa).

The tract at residues 1-24 is disordered; that stretch reads MDAMGSAAEEGTQKKKRRPLVPPP. At 1–51 the chain is on the cytoplasmic side; it reads MDAMGSAAEEGTQKKKRRPLVPPPPRPPRALFCLGLQNPFRKFCINIVEWK. The I repeat unit spans residues 38 to 335; that stretch reads NPFRKFCINI…LVLGVLSGEF (298 aa). The helical transmembrane segment at 52-70 threads the bilayer; the sequence is PFEMIILLTIFANCVALAI. At 71–88 the chain is on the extracellular side; sequence FLPMPEDDTNSTNSVLEK. Residue asparagine 80 is glycosylated (N-linked (GlcNAc...) asparagine). The chain crosses the membrane as a helical span at residues 89–108; that stretch reads VEYIFLFIFTIESFLKIVAY. Topologically, residues 109 to 120 are cytoplasmic; sequence GFILHTDAYLRN. Residues 121 to 139 form a helical membrane-spanning segment; it reads GWNILDFTIVSVGVFSVLL. Over 140–158 the chain is Extracellular; it reads EQISKLQGLPAPGKSSGFN. A helical membrane pass occupies residues 159-177; sequence VKALRAFRVLRPLRLVSGV. Residues 178 to 196 are Cytoplasmic-facing; sequence PSLQVVLNSIIKAMIPLLH. The chain crosses the membrane as a helical span at residues 197–216; that stretch reads IALLVLFMIIIYAIVGLELF. Residues 217–307 are Extracellular-facing; sequence SGKMHKTCYF…WVNDAIGNEW (91 aa). A glycan (N-linked (GlcNAc...) asparagine) is linked at asparagine 255. Position 290 (glutamate 290) interacts with Ca(2+). The chain crosses the membrane as a helical span at residues 308 to 332; that stretch reads PWIYFVSLILLGSFFVLNLVLGVLS. The Cytoplasmic portion of the chain corresponds to 333 to 431; sequence GEFTKEREKA…RKSRDLVKSR (99 aa). The segment at 355–372 is binding to the beta subunit; sequence QAMDEDLRGYLDWITHAE. One copy of the II repeat lies at 417–663; the sequence is HRLLRRKSRD…VFLAIAVDNL (247 aa). The helical transmembrane segment at 432-450 threads the bilayer; it reads FFYWLVIIIILLNTVIIAT. Residues 451–465 lie on the Extracellular side of the membrane; sequence EHHHQPDSLTKAQDI. The chain crosses the membrane as a helical span at residues 466-485; the sequence is ANEVLLALFTMEMIVKIYAL. The Cytoplasmic portion of the chain corresponds to 486–493; it reads GFQSYFMS. The helical transmembrane segment at 494 to 512 threads the bilayer; the sequence is LFNRFDSFVVCTGLLEVML. Over 513–522 the chain is Extracellular; it reads VASDIMSPLG. Residues 523–541 traverse the membrane as a helical segment; that stretch reads ISVLRCIRLLRIFKITRYW. Residues 542–560 are Cytoplasmic-facing; the sequence is TSLNNLVASLLNSVRSIAS. Residues 561–580 traverse the membrane as a helical segment; the sequence is LLLLLFLFMIIFALLGMQMF. At 581 to 635 the chain is on the extracellular side; the sequence is GGKFDFEDLEVRRSTFDTFPQALITVFQILTGEDWTAVMYNGIMAYGGPTYSGMS. Glutamate 613 contacts Ca(2+). A helical transmembrane segment spans residues 636–660; that stretch reads VCIYFIILFVCGNYILLNVFLAIAV. Over 661-797 the chain is Cytoplasmic; it reads DNLAEAENLT…VLCHRIINAT (137 aa). Disordered regions lie at residues 672-696 and 729-755; these read AQKA…TEEE and EIKD…ISPR. Residues 740-749 show a composition bias toward acidic residues; it reads PGDDEEEEPE. The stretch at 784–1066 is one III repeat; it reads NKIRVLCHRI…IFVGFVIVTF (283 aa). A helical transmembrane segment spans residues 798–816; it reads TFTNFILLFILLSSISLAA. The Extracellular portion of the chain corresponds to 817–832; sequence EDPIQPESFRNKVLSK. The chain crosses the membrane as a helical span at residues 833-852; it reads LDIVFTVIFTTEIVLKMTAY. Residues 853–864 lie on the Cytoplasmic side of the membrane; it reads GAFLHKGSFCRN. A helical membrane pass occupies residues 865 to 883; the sequence is SFNILDLSVVGVSLISMGI. The Extracellular portion of the chain corresponds to 884–890; that stretch reads ESSAISV. Residues 891 to 909 form a helical membrane-spanning segment; the sequence is VKILRVLRVLRPLRAINRA. Over 910–928 the chain is Cytoplasmic; that stretch reads KGLKHVVQCLFVAIKTIGN. A helical membrane pass occupies residues 929 to 948; sequence IVLVTTLLQFMFSCIGVQLF. The Extracellular portion of the chain corresponds to 949–1038; it reads KGKFYSCTDT…MGPIYNYRIE (90 aa). Residues 986–1075 are dihydropyridine binding; that stretch reads RVWSHSDFHF…FQEQGEQEYK (90 aa). Ca(2+) is bound at residue glutamate 1012. Residues 1039 to 1063 traverse the membrane as a helical segment; sequence IAVFFIVYIILIAFFMMNIFVGFVI. The Cytoplasmic portion of the chain corresponds to 1064-1116; it reads VTFQEQGEQEYKDCELDKNQRQCVQYALKARPLRRYIPKNPHQYKIWYVVTSS. The IV repeat unit spans residues 1103-1371; sequence NPHQYKIWYV…LFVAVIMDNF (269 aa). A helical membrane pass occupies residues 1117-1135; sequence YFEYLMFFLITLNTISLGM. Over 1136 to 1150 the chain is Extracellular; the sequence is QHYGQTAEFSYMSDI. Residues 1151 to 1170 form a helical membrane-spanning segment; the sequence is LNVAFTGIFTVEMFLKLAAF. Over 1171-1178 the chain is Cytoplasmic; sequence KAKGYFGD. A helical transmembrane segment spans residues 1179–1197; it reads PWNVFDFLIVIGSVIDVIL. At 1198–1218 the chain is on the extracellular side; it reads SEIDTPGIPATPGAEESSRIS. The helical transmembrane segment at 1219–1237 threads the bilayer; it reads ITFFRLFRVLRLVKLLSRG. Residues 1238–1256 lie on the Cytoplasmic side of the membrane; the sequence is EGVRTLLWTFIKSFQALPY. Residues 1257-1276 form a helical membrane-spanning segment; sequence VALLIVMLFFIYAVIGMQVF. Residues 1277-1343 are Extracellular-facing; sequence GKIALVDGTH…GEEYTCGTSF (67 aa). The segment at 1324–1390 is dihydropyridine binding; sequence LCDPMSDFQP…LGPHHLDEFK (67 aa). The segment at 1336-1379 is phenylalkylamine binding; sequence EYTCGTSFAYFYFISFYMLCAFLIINLFVAVIMDNFDYLTRDWS. Residues 1344-1368 traverse the membrane as a helical segment; that stretch reads AYFYFISFYMLCAFLIINLFVAVIM. Over 1369–1688 the chain is Cytoplasmic; that stretch reads DNFDYLTRDW…TNSSISQATN (320 aa). 2 disordered regions span residues 1635–1664 and 1669–1688; these read PEPV…RLTT and RVQQ…QATN. Polar residues predominate over residues 1678–1688; that stretch reads DTNSSISQATN.

It belongs to the calcium channel alpha-1 subunit (TC 1.A.1.11) family. In terms of assembly, multisubunit complex consisting of alpha-1, alpha-2, beta and delta subunits in a 1:1:1:1 ratio. The channel activity is directed by the pore-forming and voltage-sensitive alpha-1 subunit. In many cases, this subunit is sufficient to generate voltage-sensitive calcium channel activity. The auxiliary subunits beta and alpha-2/delta linked by a disulfide bridge regulate the channel activity. An additional gamma subunit is present only in skeletal muscle L-type channel. Post-translationally, phosphorylation by PKA stimulates the calcium channel function. Skeletal muscle specific.

The protein localises to the membrane. In terms of biological role, voltage-sensitive calcium channels (VSCC) mediate the entry of calcium ions into excitable cells and are also involved in a variety of calcium-dependent processes, including muscle contraction, gene expression, cell motility, cell division and cell death. The isoform alpha-1S gives rise to L-type calcium currents. Long-lasting (L-type) calcium channels belong to the 'high-voltage activated' (HVA) group. They are blocked by dihydropyridines (DHP), phenylalkylamines, and by benzothiazepines. Calcium channels containing the alpha-1S subunit play an important role in excitation-contraction coupling in skele|tal muscle. This is Voltage-dependent L-type calcium channel subunit alpha-1S from Aquarana catesbeiana (American bullfrog).